The chain runs to 453 residues: Cholecystokinin receptor (453 aa).

Residues 1–64 lie on the Extracellular side of the membrane; sequence MESLRSLSNI…ILDRKKPSPS (64 aa). Residues Asn-9, Asn-22, Asn-30, Asn-35, and Asn-39 are each glycosylated (N-linked (GlcNAc...) asparagine). The chain crosses the membrane as a helical span at residues 65–94; the sequence is DLNLWVRIVMYSVIFLLSVFGNTLIIIVLV. The Cytoplasmic portion of the chain corresponds to 95–104; it reads MNKRLRTITN. The helical transmembrane segment at 105 to 131 threads the bilayer; the sequence is SFLLSLALSDLMVAVLCMPFTLIPNLM. Topologically, residues 132–142 are extracellular; it reads ENFIFGEVICR. The cysteines at positions 141 and 223 are disulfide-linked. A helical membrane pass occupies residues 143 to 164; it reads AAAYFMGLSVSVSTFNLVAISI. The Cytoplasmic portion of the chain corresponds to 165–184; sequence ERYSAICNPLKSRVWQTRSH. A helical membrane pass occupies residues 185–205; sequence AYRVIAATWVLSSIIMIPYLV. Over 206 to 237 the chain is Extracellular; it reads YNKTVTFPMKDRRVGHQCRLVWPSKQVQQAWY. Residues 238-261 traverse the membrane as a helical segment; that stretch reads VLLLTILFFIPGVVMIVAYGLISR. Residues 262-343 lie on the Cytoplasmic side of the membrane; the sequence is ELYRGIQFEM…KLMAKKRVIR (82 aa). A helical transmembrane segment spans residues 344–364; it reads MLIVIVAMFFICWMPIFVANT. Residues 365-379 are Extracellular-facing; the sequence is WKAFDELSAFNTLTG. The chain crosses the membrane as a helical span at residues 380–403; it reads APISFIHLLSYTSACVNPLIYCFM. Cys-401 is lipidated: S-palmitoyl cysteine. At 404–453 the chain is on the cytoplasmic side; sequence NKRFRKAFLGTFSSCIKPCRNFRDTDEDIAATGASLSKFSYTTVSSLGPA.

It belongs to the G-protein coupled receptor 1 family. As to expression, brain and stomach.

The protein localises to the cell membrane. Functionally, receptor for cholecystokinin. This receptor mediates its action by association with G proteins that activate a phosphatidylinositol-calcium second messenger system. Has high affinity for CCK-8 and low affinities for gastrin-17-I, CCK-4, and unsulfated CCK-8. This Xenopus laevis (African clawed frog) protein is Cholecystokinin receptor (cckar).